Reading from the N-terminus, the 521-residue chain is Peroxisomal membrane protein PEX23 (521 aa).

The segment at 1–26 (MPTDPNSNPVSKAGLTPSSINSNISE) is disordered. Residues Asn23 and Asn53 are each glycosylated (N-linked (GlcNAc...) asparagine). 2 helical membrane passes run 111–128 (SYISVLLVTTATLFILYF) and 133–150 (IYLGHLSIVGLIFLYSIF). Asn189 is a glycosylation site (N-linked (GlcNAc...) asparagine). Residues 198 to 217 (LLFTSIFLSPGYILVCYLLF) form a helical membrane-spanning segment. Residue Asn279 is glycosylated (N-linked (GlcNAc...) asparagine). The disordered stretch occupies residues 425–446 (VSPGDDSSTDSASLPHSASETV). Polar residues predominate over residues 429–446 (DDSSTDSASLPHSASETV). Residues Asn463 and Asn467 are each glycosylated (N-linked (GlcNAc...) asparagine). The tract at residues 465 to 486 (SGNITTSAETAPDSAGTAKKRK) is disordered.

It belongs to the PEX28-32 family. PEX32 subfamily.

The protein localises to the endoplasmic reticulum membrane. Its function is as follows. With PEX29, contributes to the formation of endoplasmic reticulum-mitochondria junctions which are important for mitochondrial function. Involved in lipid dropplets formation. The sequence is that of Peroxisomal membrane protein PEX23 from Ogataea parapolymorpha (strain ATCC 26012 / BCRC 20466 / JCM 22074 / NRRL Y-7560 / DL-1) (Yeast).